Here is a 23-residue protein sequence, read N- to C-terminus: Phallacidin proprotein (23 aa).

Pro1 is a propeptide. Residues 2 to 8 (AWLVDCP) constitute a cross-link (cyclopeptide (Ala-Pro)). Positions 3 to 7 (WLVDC) form a cross-link, 2'-cysteinyl-6'-hydroxytryptophan sulfoxide (Trp-Cys). Positions 9–23 (CVGDDVNFILTRGQK) are excised as a propeptide.

Belongs to the MSDIN fungal toxin family. Processed by the macrocyclase-peptidase enzyme POPB to yield a toxic cyclic heptapeptide. POPB first removes 10 residues from the N-terminus. Conformational trapping of the remaining peptide forces the enzyme to release this intermediate rather than proceed to macrocyclization. The enzyme rebinds the remaining peptide in a different conformation and catalyzes macrocyclization of the N-terminal 7 residues.

Functionally, major toxin that belongs to the bicyclic heptapeptides called phallotoxins. Although structurally related to amatoxins, phallotoxins have a different mode of action, which is the stabilization of F-actin. Phallotoxins are poisonous when administered parenterally, but not orally because of poor absorption. In Amanita fuligineoides, this protein is Phallacidin proprotein.